The following is a 1103-amino-acid chain: DNA polymerase delta catalytic subunit (1103 aa).

Residues 1–29 (MDFKRRQGPGPGVPPKRARGGLWDEDEPS) form a disordered region. The short motif at 4 to 19 (KRRQGPGPGVPPKRAR) is the Nuclear localization signal element. Arginine 19 is modified (omega-N-methylarginine). Lysine 570 participates in a covalent cross-link: Glycyl lysine isopeptide (Lys-Gly) (interchain with G-Cter in SUMO2). Positions 1008, 1011, 1022, and 1025 each coordinate Zn(2+). The segment at 1008–1025 (CIGCRSVINHQGAVCEFC) adopts a CysA-type zinc-finger fold. The [4Fe-4S] cluster site is built by cysteine 1054, cysteine 1057, cysteine 1067, and cysteine 1072. Positions 1054–1072 (CQRCQGSLHEDVICTSRDC) match the CysB motif motif.

It belongs to the DNA polymerase type-B family. Component of the tetrameric DNA polymerase delta complex (Pol-delta4), which consists of POLD1/p125, POLD2/p50, POLD3/p66/p68 and POLD4/p12, with POLD1 bearing both DNA polymerase and 3' to 5' proofreading exonuclease activities. Within Pol-delta4, directly interacts with POLD2 and POLD4. Following genotoxic stress by DNA-damaging agents, such as ultraviolet light and methyl methanesulfonate, or by replication stress induced by treatment with hydroxyurea or aphidicolin, Pol-delta4 is converted into a trimeric form of the complex (Pol-delta3) by POLD4 degradation. Pol-delta3 is the major form at S phase replication sites and DNA damage sites. POLD1 displays different catalytic properties depending upon the complex it is found in. It exhibits higher proofreading activity and fidelity than Pol-delta4, making it particularly well suited to respond to DNA damage. Directly interacts with PCNA, as do POLD3 and POLD4; this interaction stimulates Pol-delta4 polymerase activity. As POLD2 and POLD4, directly interacts with WRNIP1; this interaction stimulates DNA polymerase delta-mediated DNA synthesis, independently of the presence of PCNA. This stimulation may be due predominantly to an increase of initiation frequency and also to increased processivity. Also observed as a dimeric complex with POLD2 (Pol-delta2). Pol-delta2 is relatively insensitive to the PCNA stimulation (2-5-fold) compared to Pol-delta4 that is stimulated by over 50-fold. The DNA polymerase delta complex interacts with POLDIP2; this interaction is probably mediated through direct binding to POLD2. Interacts with CIAO1. Interacts with POLDIP2. Interacts with RFC1. It depends on [4Fe-4S] cluster as a cofactor.

The protein resides in the nucleus. It carries out the reaction DNA(n) + a 2'-deoxyribonucleoside 5'-triphosphate = DNA(n+1) + diphosphate. With respect to regulation, regulated by alteration of quaternary structure. Exhibits burst rates of DNA synthesis are about 5 times faster in the presence of POLD4 (Pol-delta4 complex) than in its absence (Pol-delta3 complex), while the affinity of the enzyme for its DNA and dNTP substrates appears unchanged. The Pol-delta3 complex is more likely to proofread DNA synthesis because it cleaves single-stranded DNA twice as fast and transfers mismatched DNA from the polymerase to the exonuclease sites 9 times faster compared to the Pol-delta3 complex. Pol-delta3 also extends mismatched primers 3 times more slowly in the absence of POLD4. The conversion of Pol-delta4 into Pol-delta3 is induced by genotoxic stress or by replication stress leading POLD4 degradation. Stimulated in the presence of PCNA. This stimulation is further increased in the presence of KCTD13/PDIP1, most probably via direct interaction between KCTD13 and POLD2. In terms of biological role, as the catalytic component of the trimeric (Pol-delta3 complex) and tetrameric DNA polymerase delta complexes (Pol-delta4 complex), plays a crucial role in high fidelity genome replication, including in lagging strand synthesis, and repair. Exhibits both DNA polymerase and 3'- to 5'-exonuclease activities. Requires the presence of accessory proteins POLD2, POLD3 and POLD4 for full activity. Depending upon the absence (Pol-delta3) or the presence of POLD4 (Pol-delta4), displays differences in catalytic activity. Most notably, expresses higher proofreading activity in the context of Pol-delta3 compared with that of Pol-delta4. Although both Pol-delta3 and Pol-delta4 process Okazaki fragments in vitro, Pol-delta3 may be better suited to fulfill this task, exhibiting near-absence of strand displacement activity compared to Pol-delta4 and stalling on encounter with the 5'-blocking oligonucleotides. Pol-delta3 idling process may avoid the formation of a gap, while maintaining a nick that can be readily ligated. Along with DNA polymerase kappa, DNA polymerase delta carries out approximately half of nucleotide excision repair (NER) synthesis following UV irradiation. Under conditions of DNA replication stress, in the presence of POLD3 and POLD4, may catalyze the repair of broken replication forks through break-induced replication (BIR). Involved in the translesion synthesis (TLS) of templates carrying O6-methylguanine, 8oxoG or abasic sites. The polypeptide is DNA polymerase delta catalytic subunit (POLD1) (Mesocricetus auratus (Golden hamster)).